The sequence spans 220 residues: MNSAKLIDHTLLKPESTRTQIDQIIDEAKAYNFKSVCVNPTHVKYAAERLADSGVLVCTVIGFPLGASTTATKAFETEDAIQNGADEIDMVINIGALKDGRFDDVQQDIEAVVKAAKGHTVKVIIETVLLDHDEIVKASELTKAAGADFVKTSTGFAGGGATAEDVKLMKDTVGADVEVKASGGVRNLEDFNKMVEAGATRIGASAGVQIMQGLEADSDY.

Asp-89 functions as the Proton donor/acceptor in the catalytic mechanism. The active-site Schiff-base intermediate with acetaldehyde is the Lys-151. The Proton donor/acceptor role is filled by Lys-180.

Belongs to the DeoC/FbaB aldolase family. DeoC type 1 subfamily.

The protein localises to the cytoplasm. The catalysed reaction is 2-deoxy-D-ribose 5-phosphate = D-glyceraldehyde 3-phosphate + acetaldehyde. It participates in carbohydrate degradation; 2-deoxy-D-ribose 1-phosphate degradation; D-glyceraldehyde 3-phosphate and acetaldehyde from 2-deoxy-alpha-D-ribose 1-phosphate: step 2/2. Its function is as follows. Catalyzes a reversible aldol reaction between acetaldehyde and D-glyceraldehyde 3-phosphate to generate 2-deoxy-D-ribose 5-phosphate. This chain is Deoxyribose-phosphate aldolase 2, found in Staphylococcus aureus (strain MRSA252).